A 443-amino-acid chain; its full sequence is MSTTPNIGFISLGCPKNLVDSERILTELRTDGYNIIPSYENADLVIVNTCGFIDSAVQESLEAIGEALEENGKVIVTGCLGAKENQIREVHPKVLEITGPHSYEAVMKHVHKYVPRPERNIYTSLVPAQGVKLTPKHYAYLKISEGCDHRCTFCIIPSMRGDLDSRPIVQVLDEAKRLADSGVKELLIVSQDTSAYALDQSKENQNKTVFWNGAPIKNNLITLCEQLGSLGIWVRLHYVYPYPHVDDLIPLMAQGKILPYLDIPLQHASPKVLKAMKRPGAIDRTLERIKKWREICPKLTLRSTFIVGFPGETEEDFQMLLDFLEEAQLDRVGCFKFSPVEGAVATEMADQVPEDVKEERFHRFMQVQQRISAARLQQKVGKTLAVIIDEIDEEGIIGRSMADAPEIDGVVYVDNLSEQEVKVGQVISVSITNADEYDLWGTC.

The region spanning 5–115 is the MTTase N-terminal domain; it reads PNIGFISLGC…VMKHVHKYVP (111 aa). [4Fe-4S] cluster contacts are provided by cysteine 14, cysteine 50, cysteine 79, cysteine 147, cysteine 151, and cysteine 154. Positions 133–374 constitute a Radical SAM core domain; that stretch reads LTPKHYAYLK…MQVQQRISAA (242 aa). In terms of domain architecture, TRAM spans 377–443; that stretch reads QQKVGKTLAV…ADEYDLWGTC (67 aa).

Belongs to the methylthiotransferase family. RimO subfamily. [4Fe-4S] cluster serves as cofactor.

The protein resides in the cytoplasm. It catalyses the reaction L-aspartate(89)-[ribosomal protein uS12]-hydrogen + (sulfur carrier)-SH + AH2 + 2 S-adenosyl-L-methionine = 3-methylsulfanyl-L-aspartate(89)-[ribosomal protein uS12]-hydrogen + (sulfur carrier)-H + 5'-deoxyadenosine + L-methionine + A + S-adenosyl-L-homocysteine + 2 H(+). Catalyzes the methylthiolation of an aspartic acid residue of ribosomal protein uS12. The polypeptide is Ribosomal protein uS12 methylthiotransferase RimO (Actinobacillus pleuropneumoniae serotype 5b (strain L20)).